Here is a 252-residue protein sequence, read N- to C-terminus: Beta-carotene isomerase D27, chloroplastic (252 aa).

The transit peptide at Met-1–Ser-43 directs the protein to the chloroplast.

It depends on Fe cation as a cofactor. As to expression, highly expressed in roots. Expressed at low levels in leaves and stems.

It is found in the plastid. The protein resides in the chloroplast. It catalyses the reaction all-trans-beta-carotene = 9-cis-beta-carotene. Its function is as follows. Involved in strigolactones biosynthesis by catalyzing the isomerization of the C9-C10 double bond in all-trans-beta-carotene leading to 9-cis-beta-carotene and providing the substrate for CCD7. Strigolactones are hormones that inhibit tillering and shoot branching through the MAX-dependent pathway, contribute to the regulation of shoot architectural response to phosphate-limiting conditions and function as rhizosphere signals that stimulate hyphal branching of arbuscular mycorrhizal fungi and trigger seed germination of root parasitic weeds. The chain is Beta-carotene isomerase D27, chloroplastic from Medicago truncatula (Barrel medic).